A 288-amino-acid polypeptide reads, in one-letter code: Peroxisomal membrane protein pex13 (288 aa).

The disordered stretch occupies residues 1–32 (METNQNEKGPSLPSYPAGGIMSVSNSNADTNQ). Over residues 22–32 (SVSNSNADTNQ) the composition is skewed to polar residues. A helical transmembrane segment spans residues 178–198 (IYSIVSSLAIILGLVGLPYAI). Residues 222–288 (DSLEFCKADY…PSNYCSIISR (67 aa)) form the SH3 domain.

Belongs to the peroxin-13 family. In terms of assembly, interacts (via SH3 domain) with PEX14 (via SH3-binding motif); forming the PEX13-PEX14 docking complex.

Its subcellular location is the peroxisome membrane. In terms of biological role, component of the PEX13-PEX14 docking complex, a translocon channel that specifically mediates the import of peroxisomal cargo proteins bound to PEX5 receptor. The PEX13-PEX14 docking complex forms a large import pore which can be opened to a diameter of about 9 nm. Mechanistically, PEX5 receptor along with cargo proteins associates with the PEX14 subunit of the PEX13-PEX14 docking complex in the cytosol, leading to the insertion of the receptor into the organelle membrane with the concomitant translocation of the cargo into the peroxisome matrix. This chain is Peroxisomal membrane protein pex13 (pex13), found in Schizosaccharomyces pombe (strain 972 / ATCC 24843) (Fission yeast).